The chain runs to 182 residues: Bifunctional protein PyrR (182 aa).

Residues 100-112 (VVLVDDVLYTGRT) carry the PRPP-binding motif.

It belongs to the purine/pyrimidine phosphoribosyltransferase family. PyrR subfamily. As to quaternary structure, homodimer and homohexamer; in equilibrium.

It carries out the reaction UMP + diphosphate = 5-phospho-alpha-D-ribose 1-diphosphate + uracil. Functionally, regulates transcriptional attenuation of the pyrimidine nucleotide (pyr) operon by binding in a uridine-dependent manner to specific sites on pyr mRNA. This disrupts an antiterminator hairpin in the RNA and favors formation of a downstream transcription terminator, leading to a reduced expression of downstream genes. Its function is as follows. Also displays a weak uracil phosphoribosyltransferase activity which is not physiologically significant. In Natranaerobius thermophilus (strain ATCC BAA-1301 / DSM 18059 / JW/NM-WN-LF), this protein is Bifunctional protein PyrR.